A 156-amino-acid chain; its full sequence is Small ribosomal subunit protein bS16 (156 aa).

Residues 85 to 120 are compositionally biased toward basic and acidic residues; the sequence is GESGAEGTLKSKSEKEAFVAPERDSVILPEEPKQEE. Residues 85–156 are disordered; sequence GESGAEGTLK…APAEDAEKSE (72 aa). Positions 132-150 are enriched in acidic residues; it reads PAEEAAEAPAEEAAEAPAE.

It belongs to the bacterial ribosomal protein bS16 family.

This chain is Small ribosomal subunit protein bS16, found in Micrococcus luteus (strain ATCC 4698 / DSM 20030 / JCM 1464 / CCM 169 / CCUG 5858 / IAM 1056 / NBRC 3333 / NCIMB 9278 / NCTC 2665 / VKM Ac-2230) (Micrococcus lysodeikticus).